A 398-amino-acid chain; its full sequence is Nicotinate phosphoribosyltransferase (398 aa).

His-221 is subject to Phosphohistidine; by autocatalysis.

The protein belongs to the NAPRTase family. Post-translationally, transiently phosphorylated on a His residue during the reaction cycle. Phosphorylation strongly increases the affinity for substrates and increases the rate of nicotinate D-ribonucleotide production. Dephosphorylation regenerates the low-affinity form of the enzyme, leading to product release.

The enzyme catalyses nicotinate + 5-phospho-alpha-D-ribose 1-diphosphate + ATP + H2O = nicotinate beta-D-ribonucleotide + ADP + phosphate + diphosphate. The protein operates within cofactor biosynthesis; NAD(+) biosynthesis; nicotinate D-ribonucleotide from nicotinate: step 1/1. Functionally, catalyzes the synthesis of beta-nicotinate D-ribonucleotide from nicotinate and 5-phospho-D-ribose 1-phosphate at the expense of ATP. The chain is Nicotinate phosphoribosyltransferase from Buchnera aphidicola subsp. Schizaphis graminum (strain Sg).